The chain runs to 256 residues: Imidazole glycerol phosphate synthase subunit HisF (256 aa).

Catalysis depends on residues D11 and D130.

This sequence belongs to the HisA/HisF family. In terms of assembly, heterodimer of HisH and HisF.

Its subcellular location is the cytoplasm. It catalyses the reaction 5-[(5-phospho-1-deoxy-D-ribulos-1-ylimino)methylamino]-1-(5-phospho-beta-D-ribosyl)imidazole-4-carboxamide + L-glutamine = D-erythro-1-(imidazol-4-yl)glycerol 3-phosphate + 5-amino-1-(5-phospho-beta-D-ribosyl)imidazole-4-carboxamide + L-glutamate + H(+). Its pathway is amino-acid biosynthesis; L-histidine biosynthesis; L-histidine from 5-phospho-alpha-D-ribose 1-diphosphate: step 5/9. In terms of biological role, IGPS catalyzes the conversion of PRFAR and glutamine to IGP, AICAR and glutamate. The HisF subunit catalyzes the cyclization activity that produces IGP and AICAR from PRFAR using the ammonia provided by the HisH subunit. The chain is Imidazole glycerol phosphate synthase subunit HisF from Prochlorococcus marinus (strain NATL2A).